We begin with the raw amino-acid sequence, 2207 residues long: Kinetochore-associated protein 1 (2207 aa).

Thr13 carries the post-translational modification Phosphothreonine. At Ser15 the chain carries Phosphoserine. The interval 1024-1045 (EAAQAEHKHRGPPGPTPARGTH) is disordered.

As to quaternary structure, interacts with ZW10. This interaction is required for stable association with the kinetochore. Component of the RZZ complex composed of KNTC1/ROD, ZW10 and ZWILCH.

It localises to the cytoplasm. It is found in the nucleus. Its subcellular location is the chromosome. The protein localises to the centromere. The protein resides in the kinetochore. It localises to the cytoskeleton. It is found in the spindle. Functionally, essential component of the mitotic checkpoint, which prevents cells from prematurely exiting mitosis. Required for the assembly of the dynein-dynactin and MAD1-MAD2 complexes onto kinetochores. Its function related to the spindle assembly machinery is proposed to depend on its association in the mitotic RZZ complex. In Mus musculus (Mouse), this protein is Kinetochore-associated protein 1 (Kntc1).